The following is a 250-amino-acid chain: Mediator of RNA polymerase II transcription subunit 6 (250 aa).

The interval 166 to 250 (KKREEEKKED…EPTARTTSKQ (85 aa)) is disordered. Positions 204–223 (PAEDALEREEKEEVEEEEEE) are enriched in acidic residues. Over residues 224-239 (TLKTEEPTTSTDEPKF) the composition is skewed to basic and acidic residues.

This sequence belongs to the Mediator complex subunit 6 family. Component of the Mediator complex. Interacts with let-19/mdt-13. Interacts with RNA polymerase II. Interacts with mdt-28.

Its subcellular location is the nucleus. Component of the Mediator complex, a coactivator involved in the regulated transcription of nearly all RNA polymerase II-dependent genes. Mediator functions as a bridge to convey information from gene-specific regulatory proteins to the basal RNA polymerase II transcription machinery. Mediator is recruited to promoters by direct interactions with regulatory proteins and serves as a scaffold for the assembly of a functional preinitiation complex with RNA polymerase II and the general transcription factors. Acts to repress beta-catenin target genes. Required for asymmetric division of T-cells and for gonad and germ cell development. In Caenorhabditis elegans, this protein is Mediator of RNA polymerase II transcription subunit 6 (mdt-6).